Reading from the N-terminus, the 276-residue chain is Digeranylgeranylglyceryl phosphate synthase (276 aa).

A run of 8 helical transmembrane segments spans residues 12-34, 38-60, 84-104, 107-127, 146-166, 202-222, 224-244, and 256-276; these read PHNC…GSVP, ILIL…NDYF, ALWY…LISL, FAFA…LKPL, GAIA…AFLV, VAAF…KAGV, VGYY…YLIL, and QLLL…AALM.

This sequence belongs to the UbiA prenyltransferase family. DGGGP synthase subfamily. The cofactor is Mg(2+).

The protein localises to the cell membrane. The enzyme catalyses sn-3-O-(geranylgeranyl)glycerol 1-phosphate + (2E,6E,10E)-geranylgeranyl diphosphate = 2,3-bis-O-(geranylgeranyl)-sn-glycerol 1-phosphate + diphosphate. Its pathway is membrane lipid metabolism; glycerophospholipid metabolism. Prenyltransferase that catalyzes the transfer of the geranylgeranyl moiety of geranylgeranyl diphosphate (GGPP) to the C2 hydroxyl of (S)-3-O-geranylgeranylglyceryl phosphate (GGGP). This reaction is the second ether-bond-formation step in the biosynthesis of archaeal membrane lipids. The sequence is that of Digeranylgeranylglyceryl phosphate synthase from Thermococcus gammatolerans (strain DSM 15229 / JCM 11827 / EJ3).